The following is a 325-amino-acid chain: Delta(1)-pyrroline-2-carboxylate reductase (325 aa).

It belongs to the ornithine cyclodeaminase/mu-crystallin family.

It carries out the reaction L-proline + NAD(+) = 1-pyrroline-2-carboxylate + NADH + H(+). The enzyme catalyses L-proline + NADP(+) = 1-pyrroline-2-carboxylate + NADPH + H(+). Functionally, catalyzes the reduction of Delta(1)-pyrroline-2-carboxylate (Pyr2C) to L-proline, using preferentially NADPH over NADH as the electron donor. Is likely involved in a degradation pathway that converts trans-3-hydroxy-L-proline (t3LHyp) to L-proline, which allows B.cereus to grow on t3LHyp as a sole carbon source. This is Delta(1)-pyrroline-2-carboxylate reductase from Bacillus cereus (strain ATCC 14579 / DSM 31 / CCUG 7414 / JCM 2152 / NBRC 15305 / NCIMB 9373 / NCTC 2599 / NRRL B-3711).